A 232-amino-acid chain; its full sequence is Vesicle transport through interaction with t-SNAREs homolog 1B (232 aa).

An N-acetylalanine modification is found at A2. Interaction with CLINT1 regions lie at residues 2 to 23 (ASSA…GLHE) and 69 to 73 (APLSF). The Cytoplasmic segment spans residues 2–208 (ASSAASSEHF…SRKVTTNKLL (207 aa)). Positions 35 to 98 (TAGTEEKKKL…AKLHREVRST (64 aa)) form a coiled coil. T103 carries the phosphothreonine modification. Residue R107 is modified to Omega-N-methylarginine. S138 bears the Phosphoserine mark. A coiled-coil region spans residues 161–198 (SEIIEELGEQRDQLERTKSRLVNTSENLSKSRKILRSM). Residues 209–229 (LSIIILLELAILGGLVYYKFF) traverse the membrane as a helical; Anchor for type IV membrane protein segment. The Vesicular portion of the chain corresponds to 230–232 (RSH).

Belongs to the VTI1 family. In terms of assembly, forms a SNARE complex with STX7, STX8 and VAMP8 which functions in the homotypic fusion of late endosomes. Component of the SNARE complex composed of STX7, STX8, VAMP7 and VIT1B that is required for heterotypic fusion of late endosomes with lysosomes. May interact with STX17. Interacts with CLINT1. As to expression, expressed in all tissues examined.

It localises to the early endosome membrane. The protein resides in the late endosome membrane. The protein localises to the lysosome membrane. It is found in the cytoplasmic granule. Its subcellular location is the recycling endosome membrane. In terms of biological role, V-SNARE that mediates vesicle transport pathways through interactions with t-SNAREs on the target membrane. These interactions are proposed to mediate aspects of the specificity of vesicle trafficking and to promote fusion of the lipid bilayers. May be concerned with increased secretion of cytokines associated with cellular senescence. The chain is Vesicle transport through interaction with t-SNAREs homolog 1B (VTI1B) from Homo sapiens (Human).